A 572-amino-acid polypeptide reads, in one-letter code: Proline--tRNA ligase (572 aa).

Belongs to the class-II aminoacyl-tRNA synthetase family. ProS type 1 subfamily. Homodimer.

It localises to the cytoplasm. The enzyme catalyses tRNA(Pro) + L-proline + ATP = L-prolyl-tRNA(Pro) + AMP + diphosphate. Catalyzes the attachment of proline to tRNA(Pro) in a two-step reaction: proline is first activated by ATP to form Pro-AMP and then transferred to the acceptor end of tRNA(Pro). As ProRS can inadvertently accommodate and process non-cognate amino acids such as alanine and cysteine, to avoid such errors it has two additional distinct editing activities against alanine. One activity is designated as 'pretransfer' editing and involves the tRNA(Pro)-independent hydrolysis of activated Ala-AMP. The other activity is designated 'posttransfer' editing and involves deacylation of mischarged Ala-tRNA(Pro). The misacylated Cys-tRNA(Pro) is not edited by ProRS. This Psychrobacter arcticus (strain DSM 17307 / VKM B-2377 / 273-4) protein is Proline--tRNA ligase.